The sequence spans 313 residues: Aspartoacylase (313 aa).

Zn(2+) contacts are provided by His-20 and Glu-23. Residues Arg-62 and 69-70 (NR) each bind substrate. His-115 serves as a coordination point for Zn(2+). Substrate is bound by residues 163-167 (YATTR), Glu-177, and Tyr-287. Glu-177 is an active-site residue.

The protein belongs to the AspA/AstE family. Aspartoacylase subfamily. Zn(2+) is required as a cofactor.

The protein resides in the cytoplasm. Its subcellular location is the nucleus. It catalyses the reaction an N-acyl-L-aspartate + H2O = a carboxylate + L-aspartate. Its function is as follows. Catalyzes the deacetylation of N-acetylaspartic acid (NAA) to produce acetate and L-aspartate. The polypeptide is Aspartoacylase (aspa) (Xenopus tropicalis (Western clawed frog)).